The sequence spans 589 residues: Mitogen-activated protein kinase 8 (589 aa).

The interval 18-56 (RPSSSSSSSSSNNNNNNHEQPIFNSSSFSSSSNPNHSAN) is disordered. 2 stretches are compositionally biased toward low complexity: residues 20–34 (SSSSSSSSSNNNNNN) and 41–56 (NSSSFSSSSNPNHSAN). Residues 104–395 (YQIQEVVGKG…AEDALADPYF (292 aa)) form the Protein kinase domain. Residues 110-118 (VGKGSYGVV) and Lys-133 contribute to the ATP site. The active-site Proton acceptor is Asp-230. Phosphothreonine is present on Thr-266. The short motif at 266 to 268 (TDY) is the TXY element. Tyr-268 is modified (phosphotyrosine). Residue Thr-271 is modified to Phosphothreonine. A disordered region spans residues 474 to 589 (NQGKPGAAGG…TDKVASLHNS (116 aa)).

This sequence belongs to the protein kinase superfamily. CMGC Ser/Thr protein kinase family. MAP kinase subfamily. Interacts with CAM3, CAM4 and CAM7 in an calcium-dependent manner. Dually phosphorylated on Thr-266 and Tyr-268, which activates the enzyme. Autophosphorylated. Ubiquitous.

It catalyses the reaction L-seryl-[protein] + ATP = O-phospho-L-seryl-[protein] + ADP + H(+). The enzyme catalyses L-threonyl-[protein] + ATP = O-phospho-L-threonyl-[protein] + ADP + H(+). With respect to regulation, activated by threonine and tyrosine phosphorylation. Activated by two independent mechanisms, the binding of CAMs in a calcium-dependent manner and the phosphorylation by MAP kinase kinase MKK3. Activated in response to mechanical wounding, hydrogen peroxide and jasmonic acid (JA). Its function is as follows. MKK3-MPK8 and CAMs-MPK8 modules negatively regulates ROS accumulation through controlling expression of the RBOHD gene during wounding. The polypeptide is Mitogen-activated protein kinase 8 (MPK8) (Arabidopsis thaliana (Mouse-ear cress)).